A 277-amino-acid chain; its full sequence is MTFAAPLEAKSIRFRARSFVAFTLTPEAPMVEWLQGLDHWIGNSPGYFAGRPVLLDLNVLKPAPSEIAALVAELGTRGIRIYAIELEGASLGPDLPPLLVGAKEATTEGLLPGRKGGQEGSGKPDGKAAEGRAPDHGTEGRADAGAAGKGKAGASKTDESGPQVSHYDSGTLMIKTPIRSGQAIMHAHGDVIVLGSVASGSEIVAAGSIHVYGTLRGRASAGALGNTAARIFCRRNEAELLSVDGWYITAEEMEGVSRGKPVQAFLDGDGLRVETLS.

Positions 107–168 (TEGLLPGRKG…ESGPQVSHYD (62 aa)) are disordered. Over residues 122–142 (GKPDGKAAEGRAPDHGTEGRA) the composition is skewed to basic and acidic residues.

It belongs to the MinC family. Interacts with MinD and FtsZ.

Cell division inhibitor that blocks the formation of polar Z ring septums. Rapidly oscillates between the poles of the cell to destabilize FtsZ filaments that have formed before they mature into polar Z rings. Prevents FtsZ polymerization. The chain is Probable septum site-determining protein MinC from Mesorhizobium japonicum (strain LMG 29417 / CECT 9101 / MAFF 303099) (Mesorhizobium loti (strain MAFF 303099)).